The following is a 201-amino-acid chain: Lipoprotein signal peptidase (201 aa).

The next 2 membrane-spanning stretches (helical) occupy residues 73-93 and 97-117; these read SNAI…YLMI and TIGS…NLID. Catalysis depends on residues aspartate 126 and aspartate 144. The helical transmembrane segment at 135 to 155 threads the bilayer; it reads YSFPVFNLADCFIIIGVIILI.

This sequence belongs to the peptidase A8 family.

It localises to the cell inner membrane. The catalysed reaction is Release of signal peptides from bacterial membrane prolipoproteins. Hydrolyzes -Xaa-Yaa-Zaa-|-(S,diacylglyceryl)Cys-, in which Xaa is hydrophobic (preferably Leu), and Yaa (Ala or Ser) and Zaa (Gly or Ala) have small, neutral side chains.. The protein operates within protein modification; lipoprotein biosynthesis (signal peptide cleavage). Functionally, this protein specifically catalyzes the removal of signal peptides from prolipoproteins. This chain is Lipoprotein signal peptidase, found in Rickettsia conorii (strain ATCC VR-613 / Malish 7).